Here is an 898-residue protein sequence, read N- to C-terminus: Protein SOV1, mitochondrial (898 aa).

A mitochondrion-targeting transit peptide spans 1-31; that stretch reads MFKYNRSLCSSALIAKSQIRFYRLKRAPLNY.

Its subcellular location is the mitochondrion. This is Protein SOV1, mitochondrial (SOV1) from Saccharomyces cerevisiae (strain ATCC 204508 / S288c) (Baker's yeast).